A 127-amino-acid chain; its full sequence is Fluoride-specific ion channel FluC (127 aa).

Transmembrane regions (helical) follow at residues 7-27 (VYVALGGALGAVSRYLIVAWV), 38-58 (GTLAVNLLGSFLLGTAFVYVV), 70-90 (LIMVGFLGALTTFSTFSLEAW), and 102-122 (LAYILMSVILCLFAVSAGIAL). G77 and T80 together coordinate Na(+).

This sequence belongs to the fluoride channel Fluc/FEX (TC 1.A.43) family.

The protein resides in the cell inner membrane. It carries out the reaction fluoride(in) = fluoride(out). With respect to regulation, na(+) is not transported, but it plays an essential structural role and its presence is essential for fluoride channel function. In terms of biological role, fluoride-specific ion channel. Important for reducing fluoride concentration in the cell, thus reducing its toxicity. This chain is Fluoride-specific ion channel FluC, found in Hahella chejuensis (strain KCTC 2396).